The primary structure comprises 254 residues: Alcohol dehydrogenase (254 aa).

An NAD(+)-binding site is contributed by 10–33 (FVAGLGGIGLDTSREIVKSGPKNL). Serine 138 contributes to the substrate binding site. Catalysis depends on tyrosine 151, which acts as the Proton acceptor.

It belongs to the short-chain dehydrogenases/reductases (SDR) family. Homodimer.

The catalysed reaction is a primary alcohol + NAD(+) = an aldehyde + NADH + H(+). It carries out the reaction a secondary alcohol + NAD(+) = a ketone + NADH + H(+). The polypeptide is Alcohol dehydrogenase (Adh1) (Drosophila lacicola (Fruit fly)).